The primary structure comprises 361 residues: MIPTARCGALRQKIPVQAVRQYSSSTTLKTSPFAPRHLLSIADLTPTEFTTLVRNASSHKHSIKSGSIPTNLQGSLAGKTVAMMFSKRSTRTRISTEGATVQLGGHPMFLGKDDIQLGVNESLYDTAVVVSSMVSAIVARVGKHAEVADLAKHSTVPVINALCDSFHPLQAIADFQTIYETFTPKAHHLSSLGLEGLKIAWVGDANNVLFDMAISAAKMGVDLAVATPKGYEIPASMRELIQEAGKGVANPGKLIQTNVPEEAVKKADILVTDTWVSMGQEEESLKRMKAFEGFQITSELAKRGGANENWKFMHCLPRHPEEVSDEVFYSNRSLVFPEAENRLWAAISALEGFVVNKGKIA.

The transit peptide at 1–24 directs the protein to the mitochondrion; the sequence is MIPTARCGALRQKIPVQAVRQYSS. Carbamoyl phosphate contacts are provided by residues 89–92, arginine 140, histidine 167, and glutamine 170; that span reads STRT. Residues asparagine 207, aspartate 273, serine 277, and methionine 278 each contribute to the L-ornithine site. Cysteine 315 acts as the Proton acceptor in catalysis. Residues 315-316 and arginine 342 each bind carbamoyl phosphate; that span reads CL.

This sequence belongs to the aspartate/ornithine carbamoyltransferase superfamily. OTCase family. In terms of assembly, homotrimer.

Its subcellular location is the mitochondrion matrix. The enzyme catalyses carbamoyl phosphate + L-ornithine = L-citrulline + phosphate + H(+). It functions in the pathway amino-acid biosynthesis; L-arginine biosynthesis; L-arginine from L-ornithine and carbamoyl phosphate: step 1/3. The chain is Ornithine carbamoyltransferase, mitochondrial (arg1) from Aspergillus terreus.